The following is a 680-amino-acid chain: Pescadillo homolog (680 aa).

The segment at 310-330 (LDQAKDEQTAETTEESSDTID) is disordered. Residues 351–470 (QAGSLFAPFT…KLVRPDLYSP (120 aa)) enclose the BRCT domain. The disordered stretch occupies residues 472 to 680 (ATLPPHLSPW…RRKLEKGAAK (209 aa)). Residues 496–523 (AEQEEEGEAEMAEDSDEEMEEAADEKSK) are a coiled coil. The span at 497–518 (EQEEEGEAEMAEDSDEEMEEAA) shows a compositional bias: acidic residues. The segment covering 519–529 (DEKSKTASKDE) has biased composition (basic and acidic residues). Composition is skewed to acidic residues over residues 530-543 (AESESEEDDDDESV) and 551-585 (GTDDDESESESEEEDEDFGGFEDDEAASESEDEEE). Basic and acidic residues predominate over residues 586–596 (VARTQHQKELE). Residues 613-680 (ASKKKASQAK…RRKLEKGAAK (68 aa)) are a coiled coil. Basic residues predominate over residues 616-628 (KKASQAKKIAAKK). The segment covering 629–639 (RKEEEEIERQK) has biased composition (basic and acidic residues).

Belongs to the pescadillo family. Component of the NOP7 complex, composed of erb1, nop7 and ytm1. The complex is held together by erb1, which interacts with nop7 via its N-terminal domain and with ytm1 via a high-affinity interaction between the seven-bladed beta-propeller domains of the 2 proteins. The NOP7 complex associates with the 66S pre-ribosome.

It is found in the nucleus. The protein localises to the nucleolus. Its subcellular location is the nucleoplasm. In terms of biological role, component of the NOP7 complex, which is required for maturation of the 25S and 5.8S ribosomal RNAs and formation of the 60S ribosome. The polypeptide is Pescadillo homolog (nop7) (Aspergillus clavatus (strain ATCC 1007 / CBS 513.65 / DSM 816 / NCTC 3887 / NRRL 1 / QM 1276 / 107)).